Consider the following 723-residue polypeptide: Polyribonucleotide nucleotidyltransferase (723 aa).

Positions 487 and 493 each coordinate Mg(2+). In terms of domain architecture, KH spans 554–613 (PKILIMHINPDKIREVIGPSGKQINKIIDETGVKIDIEQDGTIFISSVDEAANQKAKQII). An S1 motif domain is found at 623–691 (GQVYLGKVKR…KQGRVNLSRK (69 aa)). A disordered region spans residues 702 to 723 (GELPRESREKRGRRPERHRMKP). Residues 711 to 723 (KRGRRPERHRMKP) are compositionally biased toward basic residues.

The protein belongs to the polyribonucleotide nucleotidyltransferase family. It depends on Mg(2+) as a cofactor.

It is found in the cytoplasm. It catalyses the reaction RNA(n+1) + phosphate = RNA(n) + a ribonucleoside 5'-diphosphate. Its function is as follows. Involved in mRNA degradation. Catalyzes the phosphorolysis of single-stranded polyribonucleotides processively in the 3'- to 5'-direction. This Geobacillus kaustophilus (strain HTA426) protein is Polyribonucleotide nucleotidyltransferase.